We begin with the raw amino-acid sequence, 101 residues long: Small ribosomal subunit protein uS14 (101 aa).

It belongs to the universal ribosomal protein uS14 family. As to quaternary structure, part of the 30S ribosomal subunit. Contacts proteins S3 and S10.

Its function is as follows. Binds 16S rRNA, required for the assembly of 30S particles and may also be responsible for determining the conformation of the 16S rRNA at the A site. This chain is Small ribosomal subunit protein uS14, found in Pseudomonas syringae pv. tomato (strain ATCC BAA-871 / DC3000).